The primary structure comprises 313 residues: MGWVPDEWSIDHDTLIDAGGYVQKLKLYPYFDAAHYVLTCLSVRHDLGPDAISFSRKHPFSCWLSCMLMSFAGSFLSCFLLGEPIISPLKQHADILLGSIVWYLVFYSPFDVVFRLATWFPVKLGLSVLKEVQRTHKIAAGVKHAVRIYPESYLVQILVGVAKGAGSGVVKIVEQLARGTWHPTNHEILRPSFTTKACVIASIVFTLERHSMYVTAPHDLVYLCVVGFFIYFKLASLCLSVHDVLMPIENVLCAVFMGGIIDAFAKAVDATKKAIHSNRVLSEEEILSKEREKVLKKKKLLAQMSNGTDKKNN.

Topologically, residues 1–28 are lumenal; that stretch reads MGWVPDEWSIDHDTLIDAGGYVQKLKLY. A helical transmembrane segment spans residues 29-48; the sequence is PYFDAAHYVLTCLSVRHDLG. Residues 49–57 lie on the Cytoplasmic side of the membrane; that stretch reads PDAISFSRK. Residues 58–82 traverse the membrane as a discontinuously helical segment; the sequence is HPFSCWLSCMLMSFAGSFLSCFLLG. The Lumenal portion of the chain corresponds to 83-90; it reads EPIISPLK. The helical transmembrane segment at 91–108 threads the bilayer; it reads QHADILLGSIVWYLVFYS. Residues 109–118 are Cytoplasmic-facing; it reads PFDVVFRLAT. A helical membrane pass occupies residues 119–149; that stretch reads WFPVKLGLSVLKEVQRTHKIAAGVKHAVRIY. Residues Lys-130 and Arg-134 each contribute to the a 1,2-diacyl-sn-glycero-3-phospho-(1D-myo-inositol-4,5-bisphosphate) site. At 150 to 151 the chain is on the lumenal side; the sequence is PE. Residues 152–178 traverse the membrane as a discontinuously helical segment; it reads SYLVQILVGVAKGAGSGVVKIVEQLAR. Gly-168 is an a 1,2-diacyl-sn-glycero-3-phospho-(1D-myo-inositol-4,5-bisphosphate) binding site. Residues 179–192 lie on the Cytoplasmic side of the membrane; that stretch reads GTWHPTNHEILRPS. Residues 193–210 form a helical membrane-spanning segment; the sequence is FTTKACVIASIVFTLERH. The Lumenal portion of the chain corresponds to 211–216; it reads SMYVTA. The chain crosses the membrane as a helical span at residues 217–239; sequence PHDLVYLCVVGFFIYFKLASLCL. Residues 240-313 lie on the Cytoplasmic side of the membrane; the sequence is SVHDVLMPIE…MSNGTDKKNN (74 aa).

The protein belongs to the TMEM38 family. Homotrimer; trimerization probably requires binding to phosphatidylinositol 4,5-bisphosphate (PIP2).

It is found in the endoplasmic reticulum membrane. Functionally, potassium channel that mediates transmembrane potassium transport. Might be required for maintenance of rapid intracellular calcium release. May act as a potassium counter-ion channel that functions in synchronization with calcium release from intracellular stores. Binds phosphatidylinositol 4,5-bisphosphate (PIP2). The polypeptide is Trimeric intracellular cation channel type 1B.2 (Caenorhabditis elegans).